The sequence spans 221 residues: MESPSARTLGNSLGDDSGNGNENGNGSGNGNTTMMPHGIYHERQTRHLCGLHALNNLFQGPDMFSKSELDDYCTTLTPRNWLNPHRSWIGWGNYDVNVIMYALQQRNCEAVWFDRRRDPHCLNLSVIFGFILNVPAQMSLGYYIPLPFHMRHWLALRRLNGSYYNLDSKLREPKCLGTEQQFLEFLATQLQMDHELFLVLDEETDCKDKSQQRWLLPQFRD.

Residues Met1–His37 are disordered. Low complexity predominate over residues Leu9 to Gly20. In terms of domain architecture, Josephin spans Pro36–Trp214. The active-site Nucleophile is the Cys49. His152 (proton acceptor) is an active-site residue.

The enzyme catalyses Thiol-dependent hydrolysis of ester, thioester, amide, peptide and isopeptide bonds formed by the C-terminal Gly of ubiquitin (a 76-residue protein attached to proteins as an intracellular targeting signal).. In terms of biological role, may act as a deubiquitinating enzyme. The protein is Josephin-like protein of Drosophila melanogaster (Fruit fly).